The sequence spans 259 residues: Transcription factor bHLH80 (259 aa).

Residues 1 to 25 (MQSTHISGGSSGGGGGGGGEVSRSG) are disordered. Residues 9–20 (GSSGGGGGGGGE) are compositionally biased toward gly residues. One can recognise a bHLH domain in the interval 187–237 (CATHPRSIAERVRRTRISDRIRRLQELVPNMDKQTNTADMLEEAVEYVKAL).

As to quaternary structure, homodimer. Expressed constitutively in roots, leaves, stems, and flowers.

The protein resides in the nucleus. The polypeptide is Transcription factor bHLH80 (BHLH80) (Arabidopsis thaliana (Mouse-ear cress)).